The primary structure comprises 267 residues: tRNA pseudouridine synthase A (267 aa).

D51 (nucleophile) is an active-site residue. A substrate-binding site is contributed by Y109.

This sequence belongs to the tRNA pseudouridine synthase TruA family. As to quaternary structure, homodimer.

It carries out the reaction uridine(38/39/40) in tRNA = pseudouridine(38/39/40) in tRNA. Functionally, formation of pseudouridine at positions 38, 39 and 40 in the anticodon stem and loop of transfer RNAs. The polypeptide is tRNA pseudouridine synthase A (Staphylococcus epidermidis (strain ATCC 12228 / FDA PCI 1200)).